Consider the following 410-residue polypeptide: Argininosuccinate synthase (410 aa).

Residues 13–21 (AYSGGLDTS) and alanine 40 contribute to the ATP site. The L-citrulline site is built by tyrosine 91 and serine 96. Glycine 121 contributes to the ATP binding site. L-aspartate contacts are provided by threonine 123, asparagine 127, and aspartate 128. Position 127 (asparagine 127) interacts with L-citrulline. Residues arginine 131, serine 182, serine 191, glutamate 267, and tyrosine 279 each coordinate L-citrulline.

The protein belongs to the argininosuccinate synthase family. Type 1 subfamily. In terms of assembly, homotetramer.

The protein localises to the cytoplasm. The enzyme catalyses L-citrulline + L-aspartate + ATP = 2-(N(omega)-L-arginino)succinate + AMP + diphosphate + H(+). The protein operates within amino-acid biosynthesis; L-arginine biosynthesis; L-arginine from L-ornithine and carbamoyl phosphate: step 2/3. In Maricaulis maris (strain MCS10) (Caulobacter maris), this protein is Argininosuccinate synthase.